Here is a 167-residue protein sequence, read N- to C-terminus: Gametocyte-specific factor 1 (167 aa).

The residue at position 8 (Ser8) is a Phosphoserine. 2 CHHC U11-48K-type zinc fingers span residues 14 to 41 (LLQC…RKNH) and 48 to 75 (LATC…DDRS). 8 residues coordinate Zn(2+): Cys17, His23, His33, Cys37, Cys51, His57, His67, and Cys71.

This sequence belongs to the UPF0224 (FAM112) family.

The protein localises to the cytoplasm. Required for spermatogenesis and is involved in the suppression of retrotransposon transcription in male germ cells. This is Gametocyte-specific factor 1 (GTSF1) from Homo sapiens (Human).